The following is a 163-amino-acid chain: Crossover junction endodeoxyribonuclease RuvC (163 aa).

Catalysis depends on residues D4, E65, and D138. D4, E65, and D138 together coordinate Mg(2+).

It belongs to the RuvC family. Homodimer which binds Holliday junction (HJ) DNA. The HJ becomes 2-fold symmetrical on binding to RuvC with unstacked arms; it has a different conformation from HJ DNA in complex with RuvA. In the full resolvosome a probable DNA-RuvA(4)-RuvB(12)-RuvC(2) complex forms which resolves the HJ. Requires Mg(2+) as cofactor.

It localises to the cytoplasm. The catalysed reaction is Endonucleolytic cleavage at a junction such as a reciprocal single-stranded crossover between two homologous DNA duplexes (Holliday junction).. The RuvA-RuvB-RuvC complex processes Holliday junction (HJ) DNA during genetic recombination and DNA repair. Endonuclease that resolves HJ intermediates. Cleaves cruciform DNA by making single-stranded nicks across the HJ at symmetrical positions within the homologous arms, yielding a 5'-phosphate and a 3'-hydroxyl group; requires a central core of homology in the junction. The consensus cleavage sequence is 5'-(A/T)TT(C/G)-3'. Cleavage occurs on the 3'-side of the TT dinucleotide at the point of strand exchange. HJ branch migration catalyzed by RuvA-RuvB allows RuvC to scan DNA until it finds its consensus sequence, where it cleaves and resolves the cruciform DNA. This Corynebacterium diphtheriae (strain ATCC 700971 / NCTC 13129 / Biotype gravis) protein is Crossover junction endodeoxyribonuclease RuvC.